Consider the following 209-residue polypeptide: Orotate phosphoribosyltransferase (209 aa).

Residues Arg-96, Lys-100, His-102, and 122–130 (EDLISTGGS) each bind 5-phospho-alpha-D-ribose 1-diphosphate. Ser-126 is an orotate binding site.

This sequence belongs to the purine/pyrimidine phosphoribosyltransferase family. PyrE subfamily. Homodimer. Mg(2+) serves as cofactor.

The catalysed reaction is orotidine 5'-phosphate + diphosphate = orotate + 5-phospho-alpha-D-ribose 1-diphosphate. Its pathway is pyrimidine metabolism; UMP biosynthesis via de novo pathway; UMP from orotate: step 1/2. Its function is as follows. Catalyzes the transfer of a ribosyl phosphate group from 5-phosphoribose 1-diphosphate to orotate, leading to the formation of orotidine monophosphate (OMP). The protein is Orotate phosphoribosyltransferase of Lactococcus lactis subsp. cremoris (strain MG1363).